The following is a 585-amino-acid chain: Arginine--tRNA ligase (585 aa).

Positions 127-137 match the 'HIGH' region motif; it reads PNTNKPLHVGH.

The protein belongs to the class-I aminoacyl-tRNA synthetase family. Monomer.

It localises to the cytoplasm. The catalysed reaction is tRNA(Arg) + L-arginine + ATP = L-arginyl-tRNA(Arg) + AMP + diphosphate. This chain is Arginine--tRNA ligase, found in Borrelia duttonii (strain Ly).